The chain runs to 265 residues: MSDLISALLLGILEGLTEFLPISSTGHLLIAEQWLGRRSDFFNIVIQAGAILAICLALRQRLWSLATGLGERANRDYVLKVGVAFLVTAVVGLIVRKAGWQLPETLQPVAWALLIGGVWMLVAEHFAGKLPERDVVTWKVAIAVGLAQVVAGVFPGTSRSASTIFIAMLLGLSKRSAAADFVFMVGIPTMFAASGYALLEMYKEGGFGTENWTDVAVAFVAATITGFVVVKWLLGYIKKHRFTVFAVYRMLLGAALLLWLPAAAG.

7 consecutive transmembrane segments (helical) span residues 38–58, 75–95, 108–128, 135–155, 181–201, 215–235, and 244–264; these read RSDFFNIVIQAGAILAICLAL, RDYVLKVGVAFLVTAVVGLIV, PVAWALLIGGVWMLVAEHFAG, VVTWKVAIAVGLAQVVAGVFP, FVFMVGIPTMFAASGYALLEM, VAVAFVAATITGFVVVKWLLG, and VFAVYRMLLGAALLLWLPAAA.

This sequence belongs to the UppP family.

The protein resides in the cell inner membrane. The catalysed reaction is di-trans,octa-cis-undecaprenyl diphosphate + H2O = di-trans,octa-cis-undecaprenyl phosphate + phosphate + H(+). Functionally, catalyzes the dephosphorylation of undecaprenyl diphosphate (UPP). Confers resistance to bacitracin. This chain is Undecaprenyl-diphosphatase, found in Xanthomonas euvesicatoria pv. vesicatoria (strain 85-10) (Xanthomonas campestris pv. vesicatoria).